Consider the following 296-residue polypeptide: Cobalamin trafficking protein CblD (296 aa).

The N-terminal 92 residues, 1-92, are a transit peptide targeting the mitochondrion; it reads MANVLCNRAR…HLNGTAAQRK (92 aa).

Heterodimer with MMACHC. Forms a multiprotein complex with MMACHC, MTR and MTRR.

It localises to the cytoplasm. The protein localises to the mitochondrion. Involved in cobalamin metabolism and trafficking. Plays a role in regulating the biosynthesis and the proportion of two coenzymes, methylcob(III)alamin (MeCbl) and 5'-deoxyadenosylcobalamin (AdoCbl). Promotes oxidation of cob(II)alamin bound to MMACHC. The processing of cobalamin in the cytosol occurs in a multiprotein complex composed of at least MMACHC, MMADHC, MTRR (methionine synthase reductase) and MTR (methionine synthase) which may contribute to shuttle safely and efficiently cobalamin towards MTR in order to produce methionine. The sequence is that of Cobalamin trafficking protein CblD (MMADHC) from Gallus gallus (Chicken).